The chain runs to 117 residues: UPF0342 protein OB1136 (117 aa).

Belongs to the UPF0342 family.

This Oceanobacillus iheyensis (strain DSM 14371 / CIP 107618 / JCM 11309 / KCTC 3954 / HTE831) protein is UPF0342 protein OB1136.